The following is a 116-amino-acid chain: Ribosome-binding factor A (116 aa).

Belongs to the RbfA family. In terms of assembly, monomer. Binds 30S ribosomal subunits, but not 50S ribosomal subunits or 70S ribosomes.

The protein resides in the cytoplasm. Functionally, one of several proteins that assist in the late maturation steps of the functional core of the 30S ribosomal subunit. Associates with free 30S ribosomal subunits (but not with 30S subunits that are part of 70S ribosomes or polysomes). Required for efficient processing of 16S rRNA. May interact with the 5'-terminal helix region of 16S rRNA. This is Ribosome-binding factor A from Streptococcus agalactiae.